Here is a 569-residue protein sequence, read N- to C-terminus: MPATISRADYAAMFGPTTGDRLRLADTDLIIEVERDLTTYGEEVKFGGGKVIRDGMGQAQTTRAEGAVDTVITNALIVDHSGIYKADVGLKNGRIAKIGKAGNPDTQPGVDIIVGPGTEAIAGEGRILTAGGFDSHIHFICPQQIEDALHSGLTTMLGGGTGPAHGTLATTCTPGPWHIGRMLQAADAFPMNLAFAGKGNASLPAALEEQVLGGACALKLHEDWGTTPAAIDCCLSVADAMDVQVMIHTDTLNESGFVENTVAAMKGRTIHAFHTEGAGGGHAPDIIKICGEEHVLPSSTNPTRPFTVNTLEEHLDMLMVCHHLDKSIPEDVAFAESRIRRETIAAEDILHDMGAFSIIASDSQAMGRVGEVLIRTWQTADKMRKQRGRLAEETGDNDNFRVRRYIAKYTINPAIAHGIGHEIGSIEEGKRADLVLWNPAFFGVKPEMVLLGGTIVMAQMGDPNASIPTPQPVYSRPMFGAYGRSVENCAVTFVSAAAHEDGIGARLGLAKETLAVTNTRNIGKSHLILNNATPQIEVNPETYEVRADGELLTCQPAEVLPMAQRYFLF.

Residues 131-569 (GGFDSHIHFI…LPMAQRYFLF (439 aa)) enclose the Urease domain. Residues histidine 136, histidine 138, and lysine 219 each coordinate Ni(2+). Lysine 219 is modified (N6-carboxylysine). Histidine 221 serves as a coordination point for substrate. 2 residues coordinate Ni(2+): histidine 248 and histidine 274. The Proton donor role is filled by histidine 322. Aspartate 362 contacts Ni(2+).

It belongs to the metallo-dependent hydrolases superfamily. Urease alpha subunit family. As to quaternary structure, heterotrimer of UreA (gamma), UreB (beta) and UreC (alpha) subunits. Three heterotrimers associate to form the active enzyme. Requires Ni cation as cofactor. Post-translationally, carboxylation allows a single lysine to coordinate two nickel ions.

Its subcellular location is the cytoplasm. It carries out the reaction urea + 2 H2O + H(+) = hydrogencarbonate + 2 NH4(+). Its pathway is nitrogen metabolism; urea degradation; CO(2) and NH(3) from urea (urease route): step 1/1. The chain is Urease subunit alpha from Ruegeria pomeroyi (strain ATCC 700808 / DSM 15171 / DSS-3) (Silicibacter pomeroyi).